The primary structure comprises 87 residues: Large ribosomal subunit protein bL31B (87 aa).

It belongs to the bacterial ribosomal protein bL31 family. Type B subfamily. Part of the 50S ribosomal subunit.

The sequence is that of Large ribosomal subunit protein bL31B from Latilactobacillus sakei subsp. sakei (strain 23K) (Lactobacillus sakei subsp. sakei).